A 160-amino-acid chain; its full sequence is Transcription elongation factor GreA (160 aa).

Residues lysine 2 to leucine 84 adopt a coiled-coil conformation.

It belongs to the GreA/GreB family.

In terms of biological role, necessary for efficient RNA polymerase transcription elongation past template-encoded arresting sites. The arresting sites in DNA have the property of trapping a certain fraction of elongating RNA polymerases that pass through, resulting in locked ternary complexes. Cleavage of the nascent transcript by cleavage factors such as GreA or GreB allows the resumption of elongation from the new 3'terminus. GreA releases sequences of 2 to 3 nucleotides. This is Transcription elongation factor GreA from Mesomycoplasma hyopneumoniae (strain 232) (Mycoplasma hyopneumoniae).